Reading from the N-terminus, the 89-residue chain is Small ribosomal subunit protein uS15 (89 aa).

The protein belongs to the universal ribosomal protein uS15 family. In terms of assembly, part of the 30S ribosomal subunit. Forms a bridge to the 50S subunit in the 70S ribosome, contacting the 23S rRNA.

One of the primary rRNA binding proteins, it binds directly to 16S rRNA where it helps nucleate assembly of the platform of the 30S subunit by binding and bridging several RNA helices of the 16S rRNA. In terms of biological role, forms an intersubunit bridge (bridge B4) with the 23S rRNA of the 50S subunit in the ribosome. This Maridesulfovibrio salexigens (strain ATCC 14822 / DSM 2638 / NCIMB 8403 / VKM B-1763) (Desulfovibrio salexigens) protein is Small ribosomal subunit protein uS15.